Here is a 95-residue protein sequence, read N- to C-terminus: Small ribosomal subunit protein bS18 (95 aa).

It belongs to the bacterial ribosomal protein bS18 family. Part of the 30S ribosomal subunit. Forms a tight heterodimer with protein bS6.

Binds as a heterodimer with protein bS6 to the central domain of the 16S rRNA, where it helps stabilize the platform of the 30S subunit. The polypeptide is Small ribosomal subunit protein bS18 (Rickettsia prowazekii (strain Madrid E)).